Here is a 298-residue protein sequence, read N- to C-terminus: tRNA dimethylallyltransferase 2 (298 aa).

Residue 19–26 (GATATGKT) coordinates ATP. 21–26 (TATGKT) provides a ligand contact to substrate. The segment at 44–47 (DSRQ) is interaction with substrate tRNA.

Belongs to the IPP transferase family. Monomer. Mg(2+) is required as a cofactor.

The enzyme catalyses adenosine(37) in tRNA + dimethylallyl diphosphate = N(6)-dimethylallyladenosine(37) in tRNA + diphosphate. In terms of biological role, catalyzes the transfer of a dimethylallyl group onto the adenine at position 37 in tRNAs that read codons beginning with uridine, leading to the formation of N6-(dimethylallyl)adenosine (i(6)A). This is tRNA dimethylallyltransferase 2 from Treponema denticola (strain ATCC 35405 / DSM 14222 / CIP 103919 / JCM 8153 / KCTC 15104).